The primary structure comprises 317 residues: Apolipoprotein E (317 aa).

The N-terminal stretch at 1-18 is a signal peptide; sequence MKVLWAALLVTFLAGCQA. 8 consecutive repeat copies span residues 80-101, 102-123, 124-145, 146-167, 168-189, 190-211, 212-233, and 234-255. The segment at 80–255 is 8 X 22 AA approximate tandem repeats; it reads ALMDETMKEL…RLDEVKEQVA (176 aa). A Methionine sulfoxide modification is found at Met-143. Ser-147 carries the post-translational modification Phosphoserine. An LDL and other lipoprotein receptors binding region spans residues 158 to 168; the sequence is HLRKLRKRLLR. 162 to 165 lines the heparin pocket; it reads LRKR. The lipid-binding and lipoprotein association stretch occupies residues 210–290; that stretch reads AATVGSLAGQ…SWFEPLVEDM (81 aa). 229–236 contacts heparin; it reads GERLRARM. A homooligomerization region spans residues 266-317; that stretch reads QQIRLQAEAFQARLKSWFEPLVEDMQRQWAGLVEKVQAAMGTSAAPVPSDNH. The tract at residues 278–290 is specificity for association with VLDL; the sequence is RLKSWFEPLVEDM.

Belongs to the apolipoprotein A1/A4/E family. As to quaternary structure, homotetramer. May interact with ABCA1; functionally associated with ABCA1 in the biogenesis of HDLs. May interact with APP/A4 amyloid-beta peptide; the interaction is extremely stable in vitro but its physiological significance is unclear. May interact with MAPT. May interact with MAP2. In the cerebrospinal fluid, interacts with secreted SORL1. Interacts with PMEL; this allows the loading of PMEL luminal fragment on ILVs to induce fibril nucleation. APOE exists as multiple glycosylated and sialylated glycoforms within cells and in plasma. The extent of glycosylation and sialylation are tissue and context specific. In terms of processing, glycated in plasma VLDL. Post-translationally, phosphorylated by FAM20C in the extracellular medium.

Its subcellular location is the secreted. It is found in the extracellular space. It localises to the extracellular matrix. The protein localises to the extracellular vesicle. The protein resides in the endosome. Its subcellular location is the multivesicular body. APOE is an apolipoprotein, a protein associating with lipid particles, that mainly functions in lipoprotein-mediated lipid transport between organs via the plasma and interstitial fluids. APOE is a core component of plasma lipoproteins and is involved in their production, conversion and clearance. Apolipoproteins are amphipathic molecules that interact both with lipids of the lipoprotein particle core and the aqueous environment of the plasma. As such, APOE associates with chylomicrons, chylomicron remnants, very low density lipoproteins (VLDL) and intermediate density lipoproteins (IDL) but shows a preferential binding to high-density lipoproteins (HDL). It also binds a wide range of cellular receptors including the LDL receptor/LDLR, the LDL receptor-related proteins LRP1, LRP2 and LRP8 and the very low-density lipoprotein receptor/VLDLR that mediate the cellular uptake of the APOE-containing lipoprotein particles. Finally, APOE also has a heparin-binding activity and binds heparan-sulfate proteoglycans on the surface of cells, a property that supports the capture and the receptor-mediated uptake of APOE-containing lipoproteins by cells. A main function of APOE is to mediate lipoprotein clearance through the uptake of chylomicrons, VLDLs, and HDLs by hepatocytes. APOE is also involved in the biosynthesis by the liver of VLDLs as well as their uptake by peripheral tissues ensuring the delivery of triglycerides and energy storage in muscle, heart and adipose tissues. By participating in the lipoprotein-mediated distribution of lipids among tissues, APOE plays a critical role in plasma and tissues lipid homeostasis. APOE is also involved in two steps of reverse cholesterol transport, the HDLs-mediated transport of cholesterol from peripheral tissues to the liver, and thereby plays an important role in cholesterol homeostasis. First, it is functionally associated with ABCA1 in the biogenesis of HDLs in tissues. Second, it is enriched in circulating HDLs and mediates their uptake by hepatocytes. APOE also plays an important role in lipid transport in the central nervous system, regulating neuron survival and sprouting. This chain is Apolipoprotein E (APOE), found in Pan troglodytes (Chimpanzee).